We begin with the raw amino-acid sequence, 397 residues long: uncharacterized protein (397 aa).

Transmembrane regions (helical) follow at residues 1-21 (MGAS…LMLV), 39-59 (VIQS…VVVF), 76-96 (EALS…FGVP), 103-123 (VLLF…FVGA), 124-144 (ALIE…LVMA), 194-214 (MMTP…LFAF), 219-239 (ALFG…FSLL), 255-275 (LVYL…KLML), and 301-321 (QSLT…FWSA).

It belongs to the TerC family.

The protein localises to the cell membrane. This is an uncharacterized protein from Mycobacterium bovis (strain ATCC BAA-935 / AF2122/97).